We begin with the raw amino-acid sequence, 273 residues long: 2,3,4,5-tetrahydropyridine-2,6-dicarboxylate N-succinyltransferase (273 aa).

Positions 105 and 142 each coordinate substrate.

The protein belongs to the transferase hexapeptide repeat family. As to quaternary structure, homotrimer.

It is found in the cytoplasm. It catalyses the reaction (S)-2,3,4,5-tetrahydrodipicolinate + succinyl-CoA + H2O = (S)-2-succinylamino-6-oxoheptanedioate + CoA. It functions in the pathway amino-acid biosynthesis; L-lysine biosynthesis via DAP pathway; LL-2,6-diaminopimelate from (S)-tetrahydrodipicolinate (succinylase route): step 1/3. This Bordetella avium (strain 197N) protein is 2,3,4,5-tetrahydropyridine-2,6-dicarboxylate N-succinyltransferase.